Reading from the N-terminus, the 552-residue chain is Glutamine-dependent NAD(+) synthetase (552 aa).

The 241-residue stretch at 5–245 (FRITLAQLNP…EAVVHVDLER (241 aa)) folds into the CN hydrolase domain. E45 serves as the catalytic Proton acceptor; for glutaminase activity. The active-site For glutaminase activity is K113. Catalysis depends on C149, which acts as the Nucleophile; for glutaminase activity. S175 and K181 together coordinate L-glutamine. The segment at 275-552 (LQDYLRKSGF…PMVNRWRDQS (278 aa)) is ligase. 290-297 (GLSGGIDS) serves as a coordination point for ATP. A deamido-NAD(+)-binding site is contributed by N373. ATP is bound at residue T397. E402 and K521 together coordinate deamido-NAD(+).

It in the C-terminal section; belongs to the NAD synthetase family.

The catalysed reaction is deamido-NAD(+) + L-glutamine + ATP + H2O = L-glutamate + AMP + diphosphate + NAD(+) + H(+). It participates in cofactor biosynthesis; NAD(+) biosynthesis; NAD(+) from deamido-NAD(+) (L-Gln route): step 1/1. Catalyzes the ATP-dependent amidation of deamido-NAD to form NAD. Uses L-glutamine as a nitrogen source. This chain is Glutamine-dependent NAD(+) synthetase, found in Rhodobacter capsulatus (Rhodopseudomonas capsulata).